A 307-amino-acid chain; its full sequence is Serine/threonine-protein phosphatase 4 catalytic subunit (307 aa).

The residue at position 2 (Ala2) is an N-acetylalanine. Asp54, His56, Asp82, and Asn114 together coordinate Mn(2+). His115 (proton donor) is an active-site residue. Mn(2+)-binding residues include His164 and His238. Leucine methyl ester is present on Leu307.

It belongs to the PPP phosphatase family. PP-4 (PP-X) subfamily. Serine/threonine-protein phosphatase 4 (PP4) occurs in different assemblies of the catalytic and one or more regulatory subunits. Component of the PP4 complexes PPP4C-PPP4R1, PPP4C-PPP4R2, PPP4C-PPP4R2-PPP4R3A, PPP4C-PPP4R2-PPP4R3B and PPP4C-PPP4R4. The PPP4C-PPP4R2 complex appears to be a tetramer composed of 2 molecules of PPP4C and 2 molecules of PPP4R2. Interacts with REL, NFKB1/p50 and RELA. Interacts with SMN1 and GEMIN4. Interacts with IRS4 (phosphorylated). Interacts with SMEK1/PPP4R3A; the interaction requires PP4R2. Interacts with HDAC3. Mn(2+) serves as cofactor. In terms of processing, methylation at the C-terminal Leu-307 is critical for interactions with regulatory subunits and functions in DNA repair.

The protein resides in the cytoplasm. It is found in the nucleus. It localises to the cytoskeleton. The protein localises to the microtubule organizing center. Its subcellular location is the centrosome. It carries out the reaction O-phospho-L-seryl-[protein] + H2O = L-seryl-[protein] + phosphate. The catalysed reaction is O-phospho-L-threonyl-[protein] + H2O = L-threonyl-[protein] + phosphate. Functionally, protein phosphatase that is involved in many processes such as microtubule organization at centrosomes, maturation of spliceosomal snRNPs, apoptosis, DNA repair, tumor necrosis factor (TNF)-alpha signaling, activation of c-Jun N-terminal kinase MAPK8, regulation of histone acetylation, DNA damage checkpoint signaling, NF-kappa-B activation and cell migration. The PPP4C-PPP4R1 PP4 complex may play a role in dephosphorylation and regulation of HDAC3. The PPP4C-PPP4R2-PPP4R3A PP4 complex specifically dephosphorylates H2AX phosphorylated on Ser-140 (gamma-H2AX) generated during DNA replication and required for DNA DSB repair. Dephosphorylates NDEL1 at CDK1 phosphorylation sites and negatively regulates CDK1 activity in interphase. In response to DNA damage, catalyzes RPA2 dephosphorylation, an essential step for DNA repair since it allows the efficient RPA2-mediated recruitment of RAD51 to chromatin. This is Serine/threonine-protein phosphatase 4 catalytic subunit (PPP4C) from Oryctolagus cuniculus (Rabbit).